The primary structure comprises 155 residues: uncharacterized protein (155 aa).

Disordered stretches follow at residues 1 to 22 (MSSQ…TFTF) and 108 to 155 (PFNK…DTQA). Position 2 is an N-acetylserine (serine 2). Residues serine 136, serine 144, and serine 146 each carry the phosphoserine modification. A compositionally biased stretch (acidic residues) spans 136 to 155 (SDEDLDAESDSEGEDEDTQA).

This is an uncharacterized protein from Rattus norvegicus (Rat).